Reading from the N-terminus, the 451-residue chain is D-inositol 3-phosphate glycosyltransferase (451 aa).

Position 21 (His-21) interacts with 1D-myo-inositol 3-phosphate. UDP-N-acetyl-alpha-D-glucosamine contacts are provided by residues 27–28 (QP) and Gly-35. 1D-myo-inositol 3-phosphate-binding positions include 32 to 37 (DAGGMN), Lys-90, Tyr-123, Thr-147, and Arg-167. UDP-N-acetyl-alpha-D-glucosamine contacts are provided by Arg-241, Lys-246, and Gln-305. Tyr-314, Arg-315, and Ala-317 together coordinate Mg(2+). Positions 327 and 335 each coordinate UDP-N-acetyl-alpha-D-glucosamine. Residue Thr-341 participates in Mg(2+) binding.

Belongs to the glycosyltransferase group 1 family. MshA subfamily. Homodimer.

It catalyses the reaction 1D-myo-inositol 3-phosphate + UDP-N-acetyl-alpha-D-glucosamine = 1D-myo-inositol 2-acetamido-2-deoxy-alpha-D-glucopyranoside 3-phosphate + UDP + H(+). Catalyzes the transfer of a N-acetyl-glucosamine moiety to 1D-myo-inositol 3-phosphate to produce 1D-myo-inositol 2-acetamido-2-deoxy-glucopyranoside 3-phosphate in the mycothiol biosynthesis pathway. In Nocardia farcinica (strain IFM 10152), this protein is D-inositol 3-phosphate glycosyltransferase.